A 582-amino-acid polypeptide reads, in one-letter code: External alternative NAD(P)H-ubiquinone oxidoreductase B4, mitochondrial (582 aa).

The N-terminal 39 residues, 1–39 (MSFHSFYQRASSLFKAYPSTSKILLLSTFSGGGGVLVYS), are a transit peptide targeting the mitochondrion. 65-95 (KVVVLGSGWSGYSFLSYLNNPNYDVQVVSPR) is a binding site for FAD. 227–263 (LHFVVVGGGPTGVEFSAELHDFLVQDVAKIYPKVQEF) contributes to the NAD(+) binding site. The EF-hand domain maps to 384-419 (RVMEDIAAIFNKADKGNTGTLKKKDFNSVVKDICQR). Ca(2+)-binding residues include aspartate 397, threonine 401, threonine 403, and aspartate 408. A Microbody targeting signal motif is present at residues 573-582 (FVFGRDSSSI).

This sequence belongs to the NADH dehydrogenase family. The cofactor is FAD. As to expression, expressed in seedlings, roots, cotyledons, stems, buds and flowers and, to a lower extent, in stems and leaves.

The protein resides in the mitochondrion inner membrane. The protein localises to the peroxisome. It carries out the reaction a quinone + NADH + H(+) = a quinol + NAD(+). The enzyme catalyses a ubiquinone + NADH + H(+) = a ubiquinol + NAD(+). With respect to regulation, no effect of calcium ions on activity. Alternative NADH-ubiquinone oxidoreductase which catalyzes the oxidation of mitochondrial NADH does not translocate protons across the inner mitochondrial membrane. NAD(P)H dehydrogenase; more efficient on NADH. This Arabidopsis thaliana (Mouse-ear cress) protein is External alternative NAD(P)H-ubiquinone oxidoreductase B4, mitochondrial (NDB4).